Reading from the N-terminus, the 219-residue chain is Transmembrane emp24 domain-containing protein 10 (219 aa).

Positions 1 to 31 are cleaved as a signal peptide; sequence MSGSSGPQAQRGPCPFALLLLLLLGPSSVLA. Residues 1 to 142 are required for interaction with STX17; sequence MSGSSGPQAQ…KNYEEIAKVE (142 aa). Residues 32–185 lie on the Lumenal side of the membrane; the sequence is ISFHLPVNSR…RDTNESTNTR (154 aa). In terms of domain architecture, GOLD spans 41-193; it reads RKCLREEIHK…TRVLYFSIFS (153 aa). The tract at residues 147–178 is required for TMED10 and TMED2 cis-Golgi network localization; the sequence is LEVELRRLEDLSESIVNDFAYMKKREEEMRDT. 2 positions are modified to dimethylated arginine: R171 and R176. N179 is a glycosylation site (N-linked (GlcNAc...) asparagine). Residues 186 to 206 traverse the membrane as a helical segment; the sequence is VLYFSIFSMFCLIGLATWQVF. The interval 204–219 is interaction with COPG1; sequence QVFYLRRFFKAKKLIE. Residues 207 to 219 are Cytoplasmic-facing; the sequence is YLRRFFKAKKLIE. The segment at 207 to 219 is interaction with ARF1 and IL1B; the sequence is YLRRFFKAKKLIE. Positions 211 to 212 match the COPII vesicle coat-binding motif; that stretch reads FF. Residues 211 to 219 carry the COPI vesicle coat-binding motif; the sequence is FFKAKKLIE.

The protein belongs to the EMP24/GP25L family. In terms of assembly, predominantly dimeric and to a lesser extent monomeric in the ER. Monomer and dimer in ERGIC and cis-Golgi network. Forms homooligomer (via GOLD domain); the assembly is promoted by direct binding with leaderless cargos and may form a protein channel that facilitates cargo entry into the ERGIC. Forms heterooligomeric complexes with other members of the p24 family such as TMED2, TMED7 and TMED9. Interacts (via GOLD domain) with TMED2 (via GOLD domain); the complex is required for export of TMED10 from the ER to the cis-Golgi network; the complex is proposed to be involved in cis-Golgi network dynamics and / or biogenesis. Associates with the COPI vesicle coat subunits (coatomer). Tetramerization of the cytoplasmic domain at the Golgi membrane in vitro; the complex is proposed to interact with COPI coatomer and induce budding of the vesicles. Interacts with COPG1; the interaction involves TMED10 homodimer. Interacts with ARF1 (GDP-bound); the interaction probably involves a TMED10 oligomer. Interacts with SEC23A, SEC24B, SEC24C and SEC24D components of the coat protein complex II/COPII, indicative of an association of TMED10 with the COPII vesicle coat. Interacts with CD59. Interacts with MPPE1/PGAP5; the complex might recruit and sort GPI-anchored proteins to the ER-exit site, or the interaction might lead to recycling of PGAP5 between the ER and the Golgi. Interacts with F2LR1/PAR2. Interacts with KDELR2/ERD2; the interaction is disrupted by KDELR2 ligand. Found in a complex composed at least of SURF4, TMED2 and TMED10. Associates with the presenilin-dependent gamma-secretase complex. Interacts with STX17; the interaction is direct. Interacts with IL-1; the interaction is direct. Interacts with RAB21 (active GTP-bound form); the interaction is indirect and regulates TMED10 abundance and localization at the Golgi.

It is found in the endoplasmic reticulum membrane. Its subcellular location is the endoplasmic reticulum-Golgi intermediate compartment membrane. It localises to the golgi apparatus membrane. The protein localises to the golgi apparatus. The protein resides in the cis-Golgi network membrane. It is found in the trans-Golgi network membrane. Its subcellular location is the cytoplasmic vesicle. It localises to the secretory vesicle membrane. The protein localises to the cell membrane. The protein resides in the melanosome. Cargo receptor involved in protein vesicular trafficking and quality control in the endoplasmic reticulum (ER) and Golgi. The p24 protein family is a group of transmembrane proteins that bind coat protein complex I/COPI and coat protein complex II/COPII involved in vesicular trafficking between the membranes. Acts at the lumenal side for incorporation of secretory cargo molecules into transport vesicles and involved in vesicle coat formation at the cytoplasmic side. Mainly functions in the early secretory pathway and cycles between the ER, ER-Golgi intermediate compartment (ERGIC) and Golgi, mediating cargo transport through COPI and COPII-coated vesicles. In COPII vesicle-mediated anterograde transport, involved in the transport of GPI-anchored proteins by acting together with TMED2 as their cargo receptor; the function specifically implies SEC24C and SEC24D of the COPII vesicle coat and lipid raft-like microdomains of the ER. Recognizes GPI anchors structural remodeled in the ER by the GPI inositol-deacylase/PGAP1 and the metallophosphoesterase MPPE1/PGAP5. In COPI vesicle-mediated retrograde transport, involved in the biogenesis of COPI vesicles and vesicle coat recruitment. Involved in trafficking of amyloid beta A4 protein and soluble APP-beta release (independent from the modulation of gamma-secretase activity). Involved in the KDELR2-mediated retrograde transport of the toxin A subunit (CTX-A-K63)together with COPI and the COOH terminus of KDELR2. On Golgi membranes, acts as a primary receptor for ARF1-GDP, a GTP-binding protein involved in COPI-vesicle formation. Increases coatomer-dependent GTPase-activating activity of ARFGAP2 which mediates the hydrolysis of ARF1-bound GTP and therefore modulates protein trafficking from the Golgi apparatus. Involved in the exocytic trafficking of G protein-coupled receptors F2LR1/PAR2 (trypsin and tryspin-like enzyme receptor), OPRM1 (opioid receptor) and P2RY4 (UTD and UDP receptor) from the Golgi to the plasma membrane, thus contributing to receptor resensitization. In addition to its cargo receptor activity, may also act as a protein channel after oligomerization, facilitating the post-translational entry of leaderless cytoplasmic cargo into the ERGIC. Involved in the translocation into ERGIC, the vesicle entry and the secretion of leaderless cargos (lacking the secretion signal sequence), including the mature form of interleukin 1/IL-1 family members, the alpha-crystallin B chain HSPB5, the carbohydrate-binding proteins galectin-1/LGALS1 and galectin-3/LGALS3, the microtubule-associated protein Tau/MAPT, and the annexin A1/ANXA1; the translocation process is dependent on cargo protein unfolding and enhanced by chaperones HSP90AB1 and HSP90B1/GRP9. Could also associates with the presenilin-dependent gamma-secretase complex in order to regulate gamma-cleavages of the amyloid beta A4 protein to yield amyloid-beta 40/Abeta40. In Bos taurus (Bovine), this protein is Transmembrane emp24 domain-containing protein 10 (TMED10).